Here is a 360-residue protein sequence, read N- to C-terminus: Phosphate acyltransferase (360 aa).

A compositionally biased stretch (basic and acidic residues) spans 296–305 (STLRREHLDR). Positions 296–360 (STLRREHLDR…LRTAEPPGSL (65 aa)) are disordered. The segment covering 314-333 (PRQRRRPRRQKRRAACRPRP) has biased composition (basic residues). Positions 334–350 (RSAAGRAPGSGVRGAAG) are enriched in low complexity.

The protein belongs to the PlsX family. In terms of assembly, homodimer. Probably interacts with PlsY.

The protein resides in the cytoplasm. The enzyme catalyses a fatty acyl-[ACP] + phosphate = an acyl phosphate + holo-[ACP]. It functions in the pathway lipid metabolism; phospholipid metabolism. Functionally, catalyzes the reversible formation of acyl-phosphate (acyl-PO(4)) from acyl-[acyl-carrier-protein] (acyl-ACP). This enzyme utilizes acyl-ACP as fatty acyl donor, but not acyl-CoA. The polypeptide is Phosphate acyltransferase (Deinococcus radiodurans (strain ATCC 13939 / DSM 20539 / JCM 16871 / CCUG 27074 / LMG 4051 / NBRC 15346 / NCIMB 9279 / VKM B-1422 / R1)).